Here is a 989-residue protein sequence, read N- to C-terminus: Translation initiation factor IF-2 (989 aa).

Disordered stretches follow at residues 28–60 and 97–397; these read GVTK…TDAD and VRRD…DQNT. Composition is skewed to basic and acidic residues over residues 40-60 and 122-178; these read ETDK…TDAD and ELQR…EAAK. The span at 182–223 shows a compositional bias: low complexity; the sequence is AAAAEAAAREQQTQASKPAQAAQPAAAKAEPVAAKAAEPVVA. Over residues 231 to 280 the composition is skewed to basic and acidic residues; sequence ERAAAERAAQREAAKKAEDAARQAAEKARAEQEEIAKRRAAAEAEARAIR. Low complexity predominate over residues 318–345; that stretch reads RPAGEAPARPAAKKPAAAAPAATTTPSA. Gly residues predominate over residues 374–387; sequence TSGGVDRGWRGGPK. A tr-type G domain is found at 489–658; that stretch reads PRPPVVTVMG…LLQAEVLELK (170 aa). Residues 498-505 are G1; it reads GHVDHGKT. GTP is bound at residue 498-505; the sequence is GHVDHGKT. The G2 stretch occupies residues 523–527; the sequence is GITQH. The segment at 544 to 547 is G3; the sequence is DTPG. Residues 544 to 548 and 598 to 601 contribute to the GTP site; these read DTPGH and NKID. Residues 598–601 are G4; that stretch reads NKID. The segment at 634–636 is G5; it reads SAK.

This sequence belongs to the TRAFAC class translation factor GTPase superfamily. Classic translation factor GTPase family. IF-2 subfamily.

It localises to the cytoplasm. Its function is as follows. One of the essential components for the initiation of protein synthesis. Protects formylmethionyl-tRNA from spontaneous hydrolysis and promotes its binding to the 30S ribosomal subunits. Also involved in the hydrolysis of GTP during the formation of the 70S ribosomal complex. The sequence is that of Translation initiation factor IF-2 from Paraburkholderia xenovorans (strain LB400).